A 352-amino-acid chain; its full sequence is MLETLRERLLSVQQDFTSGLKTLSDKSREAKVKGKPRTAPRLPKYSAGLELLSRYEDAWAALHRRAKECADAGELVDSEVVMLSAHWEKKRTSLNELQGQLQQLPALLQDLESLMASLAHLETSFEEVENHLLHLEDLCGQCELERHKQAQAQHLESYKKSKRKELEAFKAELDTEHTQKALEMEHTQQLKLKERQKFFEEAFQQDMEQYLSTGYLQIAERREPMGSMSSMEVNVDVLEQMDLMDISDQEALDVFLNSGGEDNIVMSPGVEMESNPNQNEMSLQIPSPSESASQPPASPSACTDLDTADAPLIQSDEEEVQVDTALVTLHTDRKSTPGVSDDSDQCDSTQDI.

Residue serine 11 is modified to Phosphoserine. Residues 88–176 (EKKRTSLNEL…EAFKAELDTE (89 aa)) are a coiled coil. A dysbindin region spans residues 173–325 (LDTEHTQKAL…DEEEVQVDTA (153 aa)). The short motif at 243 to 256 (LMDISDQEALDVFL) is the Nuclear export signal element. The interval 267–352 (SPGVEMESNP…SDQCDSTQDI (86 aa)) is disordered. The span at 274-285 (SNPNQNEMSLQI) shows a compositional bias: polar residues. A compositionally biased stretch (low complexity) spans 286–301 (PSPSESASQPPASPSA). A phosphoserine mark is found at serine 315, serine 340, and serine 343.

Belongs to the dysbindin family. As to quaternary structure, interacts with AP3M1 and TRIM32. Interacts (isoform 1 and isoform 2 only) with the DNA-dependent protein kinase complex DNA-PK; the interaction phosphorylates DTNBP1 in vitro. Interacts directly in this complex with XRCC5 and XRCC6. Interacts with XPO1; the interaction exports DTNBP1 out of the nucleus. Component of the biogenesis of lysosome-related organelles complex 1 (BLOC-1) composed of BLOC1S1, BLOC1S2, BLOC1S3, BLOC1S4, BLOC1S5, BLOC1S6, DTNBP1/BLOC1S7 and SNAPIN/BLOC1S8. The BLOC-1 complex associates with the AP-3 protein complex and membrane protein cargos. This BLOC-1 complex also associates with the BLOC-2 complex in endosomes. Binds to DTNA and DTNB but may not be a physiological binding partner. Interacts (via its coiled coil domain) with KXD1. Interacts with AP3B2, BLOC1S5, BLOC1S6, CMYA5, PI4K2, RNF151 and SNAPIN/BLOC1S8. Interacts with XPO1; the interaction exports DTNBP1 out of the nucleus. In terms of processing, ubiquitinated by TRIM32. Ubiquitination leads to DTNBP1 degradation. Detected in brain, in hippocampus and dentate gyrus neurons. Detected at axon bundles and axon terminals, notably in the cerebellum and hippocampus. Detected in neuropil in hippocampus, lateral septum, basal ganglia and substantia nigra. Highly expressed in pyramidal cells of hippocampus CA2 and CA3. Detected at the heart and skeletal muscle sarcolemma (at protein level). Ubiquitously expressed. The highest expression is observed in testis, liver, kidney, brain, heart and lung. Expressed at lower levels in stomach and small intestine.

The protein localises to the cytoplasm. Its subcellular location is the cytoplasmic vesicle membrane. It localises to the endosome membrane. It is found in the melanosome membrane. The protein resides in the postsynaptic density. The protein localises to the endoplasmic reticulum. Its subcellular location is the nucleus. It localises to the cytoplasmic vesicle. It is found in the secretory vesicle. The protein resides in the synaptic vesicle membrane. The protein localises to the postsynaptic cell membrane. Component of the BLOC-1 complex, a complex that is required for normal biogenesis of lysosome-related organelles (LRO), such as platelet dense granules and melanosomes. In concert with the AP-3 complex, the BLOC-1 complex is required to target membrane protein cargos into vesicles assembled at cell bodies for delivery into neurites and nerve terminals. The BLOC-1 complex, in association with SNARE proteins, is also proposed to be involved in neurite extension. Associates with the BLOC-2 complex to facilitate the transport of TYRP1 independent of AP-3 function. Plays a role in synaptic vesicle trafficking and in neurotransmitter release. Plays a role in the regulation of cell surface exposure of DRD2. May play a role in actin cytoskeleton reorganization and neurite outgrowth. May modulate MAPK8 phosphorylation. Appears to promote neuronal transmission and viability through regulating the expression of SNAP25 and SYN1, modulating PI3-kinase-Akt signaling and influencing glutamatergic release. Regulates the expression of SYN1 through binding to its promoter. Modulates prefrontal cortical activity via the dopamine/D2 pathway. The sequence is that of Dysbindin (Dtnbp1) from Mus musculus (Mouse).